The sequence spans 251 residues: Ubiquinone/menaquinone biosynthesis C-methyltransferase UbiE (251 aa).

Residues threonine 74, aspartate 95, and 123–124 (NA) each bind S-adenosyl-L-methionine.

It belongs to the class I-like SAM-binding methyltransferase superfamily. MenG/UbiE family.

The catalysed reaction is a 2-demethylmenaquinol + S-adenosyl-L-methionine = a menaquinol + S-adenosyl-L-homocysteine + H(+). It catalyses the reaction a 2-methoxy-6-(all-trans-polyprenyl)benzene-1,4-diol + S-adenosyl-L-methionine = a 5-methoxy-2-methyl-3-(all-trans-polyprenyl)benzene-1,4-diol + S-adenosyl-L-homocysteine + H(+). It participates in quinol/quinone metabolism; menaquinone biosynthesis; menaquinol from 1,4-dihydroxy-2-naphthoate: step 2/2. It functions in the pathway cofactor biosynthesis; ubiquinone biosynthesis. Methyltransferase required for the conversion of demethylmenaquinol (DMKH2) to menaquinol (MKH2) and the conversion of 2-polyprenyl-6-methoxy-1,4-benzoquinol (DDMQH2) to 2-polyprenyl-3-methyl-6-methoxy-1,4-benzoquinol (DMQH2). In Shewanella halifaxensis (strain HAW-EB4), this protein is Ubiquinone/menaquinone biosynthesis C-methyltransferase UbiE.